We begin with the raw amino-acid sequence, 240 residues long: Uridylate kinase (240 aa).

12–15 (KLSG) serves as a coordination point for ATP. Gly-54 lines the UMP pocket. Residues Gly-55 and Arg-59 each coordinate ATP. Residues Asp-74 and 135 to 142 (TGNPFFTT) each bind UMP. ATP contacts are provided by Thr-162, Tyr-168, and Asp-171.

It belongs to the UMP kinase family. Homohexamer.

The protein resides in the cytoplasm. It carries out the reaction UMP + ATP = UDP + ADP. It functions in the pathway pyrimidine metabolism; CTP biosynthesis via de novo pathway; UDP from UMP (UMPK route): step 1/1. Its activity is regulated as follows. Inhibited by UTP. Its function is as follows. Catalyzes the reversible phosphorylation of UMP to UDP. This is Uridylate kinase from Xanthomonas oryzae pv. oryzae (strain KACC10331 / KXO85).